A 257-amino-acid polypeptide reads, in one-letter code: 4-diphosphocytidyl-2-C-methyl-D-erythritol kinase (257 aa).

Lys8 is a catalytic residue. 91 to 101 (PMGGGLGGGSA) contributes to the ATP binding site. The active site involves Asp131.

It belongs to the GHMP kinase family. IspE subfamily.

The catalysed reaction is 4-CDP-2-C-methyl-D-erythritol + ATP = 4-CDP-2-C-methyl-D-erythritol 2-phosphate + ADP + H(+). It participates in isoprenoid biosynthesis; isopentenyl diphosphate biosynthesis via DXP pathway; isopentenyl diphosphate from 1-deoxy-D-xylulose 5-phosphate: step 3/6. Catalyzes the phosphorylation of the position 2 hydroxy group of 4-diphosphocytidyl-2C-methyl-D-erythritol. The polypeptide is 4-diphosphocytidyl-2-C-methyl-D-erythritol kinase (Petrotoga mobilis (strain DSM 10674 / SJ95)).